We begin with the raw amino-acid sequence, 919 residues long: Calcium-transporting ATPase type 2C member 1 (919 aa).

The Cytoplasmic segment spans residues 1–70; that stretch reads MKVARFQKIP…NEFDISEDEP (70 aa). The helical transmembrane segment at 71–91 threads the bilayer; that stretch reads LWKKYISQFKNPLIMLLLASA. Residues 92-104 are Lumenal-facing; the sequence is VISVLMHQFDDAV. The helical transmembrane segment at 105–123 threads the bilayer; that stretch reads SITVAILIVVTVAFVQEYR. Residues 124-262 are Cytoplasmic-facing; the sequence is SEKSLEELSK…APKTPLQKSM (139 aa). The helical transmembrane segment at 263-282 threads the bilayer; the sequence is DLLGKQLSFYSFGIIGIIML. Topologically, residues 283–294 are lumenal; that stretch reads VGWLLGKDILEM. The helical transmembrane segment at 295 to 312 threads the bilayer; that stretch reads FTISVSLAVAAIPEGLPI. Valine 303, alanine 304, isoleucine 306, and glutamate 308 together coordinate Ca(2+). Residues 313-699 are Cytoplasmic-facing; the sequence is VVTVTLALGV…EEGKGIYNNI (387 aa). Aspartate 350 (4-aspartylphosphate intermediate) is an active-site residue. 2 residues coordinate Mg(2+): aspartate 644 and aspartate 648. The helical transmembrane segment at 700-719 threads the bilayer; the sequence is KNFVRFQLSTSIAALTLISL. Residues 720–729 are Lumenal-facing; it reads ATLMNFPNPL. A helical membrane pass occupies residues 730–750; the sequence is NAMQILWINIIMDGPPAQSLG. Ca(2+) is bound by residues asparagine 738 and aspartate 742. Over 751 to 770 the chain is Cytoplasmic; sequence VEPVDKDVIRKPPRNWKDSI. The helical transmembrane segment at 771–793 threads the bilayer; sequence LTKNLILKILVSSIIIVCGTLFV. Over 794-808 the chain is Lumenal; sequence FWRELRDNVITPRDT. Residues 809–828 form a helical membrane-spanning segment; sequence TMTFTCFVFFDMFNALSSRS. At 829–841 the chain is on the cytoplasmic side; sequence QTKSVFEIGLCSN. The chain crosses the membrane as a helical span at residues 842-860; it reads RMFCYAVLGSIMGQLLVIY. Residues 861 to 875 are Lumenal-facing; that stretch reads FPPLQKVFQTESLSI. Residues 876 to 896 form a helical membrane-spanning segment; the sequence is LDLLFLLGLTSSVCIVAEIIK. Residues 897-919 lie on the Cytoplasmic side of the membrane; sequence KVERSREKIQKHVSSTSSSFLEV.

Belongs to the cation transport ATPase (P-type) (TC 3.A.3) family. Type IIA subfamily. Monomer. Homodimer. Found in most tissues except colon, thymus, spleen and leukocytes. Expressed in keratinocytes (at protein level).

Its subcellular location is the golgi apparatus. The protein localises to the trans-Golgi network membrane. The protein resides in the golgi stack membrane. It carries out the reaction Ca(2+)(in) + ATP + H2O = Ca(2+)(out) + ADP + phosphate + H(+). The enzyme catalyses Mn(2+)(in) + ATP + H2O = Mn(2+)(out) + ADP + phosphate + H(+). In terms of biological role, ATP-driven pump that supplies the Golgi apparatus with Ca(2+) and Mn(2+) ions, both essential cofactors for processing and trafficking of newly synthesized proteins in the secretory pathway. Within a catalytic cycle, acquires Ca(2+) or Mn(2+) ions on the cytoplasmic side of the membrane and delivers them to the lumenal side. The transfer of ions across the membrane is coupled to ATP hydrolysis and is associated with a transient phosphorylation that shifts the pump conformation from inward-facing to outward-facing state. Plays a primary role in the maintenance of Ca(2+) homeostasis in the trans-Golgi compartment with a functional impact on Golgi and post-Golgi protein sorting as well as a structural impact on cisternae morphology. Responsible for loading the Golgi stores with Ca(2+) ions in keratinocytes, contributing to keratinocyte differentiation and epidermis integrity. Participates in Ca(2+) and Mn(2+) ions uptake into the Golgi store of hippocampal neurons and regulates protein trafficking required for neural polarity. May also play a role in the maintenance of Ca(2+) and Mn(2+) homeostasis and signaling in the cytosol while preventing cytotoxicity. The chain is Calcium-transporting ATPase type 2C member 1 from Homo sapiens (Human).